The chain runs to 1822 residues: Integrin beta-4 (1822 aa).

A signal peptide spans M1–A27. The Extracellular portion of the chain corresponds to N28 to S710. In terms of domain architecture, PSI spans R29–Q73. 8 cysteine pairs are disulfide-bonded: C30-C48, C38-C455, C41-C61, C51-C72, C245-C288, C457-C476, C468-C479, and C481-C490. The VWFA domain occupies D131–S329. Mg(2+)-binding residues include S139 and S141. Residues S141, D144, D145, and D176 each contribute to the Ca(2+) site. An involved in NRG1- and IGF1-binding region spans residues W194–P199. Ca(2+) contacts are provided by N228, D230, P232, and E233. E233 serves as a coordination point for Mg(2+). A glycan (N-linked (GlcNAc...) asparagine) is linked at N327. E350 lines the Ca(2+) pocket. 4 consecutive I-EGF domains span residues C457–N491, C492–E537, Y538–D574, and C575–E615. N-linked (GlcNAc...) asparagine glycosylation occurs at N491. Intrachain disulfides connect C492/C520, C503/C518, C512/C523, C525/C536, C543/C557, C551/C562, C564/C573, C575/C598, C582/C596, C590/C601, and C603/C614. N579 carries N-linked (GlcNAc...) asparagine glycosylation. N-linked (GlcNAc...) asparagine glycosylation is present at N617. Intrachain disulfides connect C626–C671, C632–C651, C635–C648, and C680–C706. N695 carries N-linked (GlcNAc...) asparagine glycosylation. The chain crosses the membrane as a helical span at residues F711–W733. Positions C732–C749 are palmitoylated on several cysteines. Residues K734–T1822 lie on the Cytoplasmic side of the membrane. S771, S1069, and S1119 each carry phosphoserine. A Calx-beta domain is found at V979–S1084. A disordered region spans residues T1113–S1140. 2 Fibronectin type-III domains span residues A1129–E1218 and E1222–K1321. The disordered stretch occupies residues L1400–N1444. Residues D1418–G1427 show a composition bias toward gly residues. Residues S1454, S1457, and S1474 each carry the phosphoserine modification. The residue at position 1487 (T1487) is a Phosphothreonine. Phosphoserine is present on S1494. The tract at residues L1495 to A1525 is disordered. Positions S1503–S1518 are enriched in polar residues. At T1530 the chain carries Phosphothreonine. Fibronectin type-III domains lie at T1530–Q1625 and A1643–G1739. S1791 is subject to Phosphoserine.

This sequence belongs to the integrin beta chain family. Heterodimer of an alpha and a beta subunit. Beta-4 associates with alpha-6. Interacts (via cytoplasmic region) with COL17A1 (via cytoplasmic region). Interacts (via cytoplasmic region) with DST isoform 3 (via N-terminus). Isoform beta-4a interacts (via cytoplasmic domain) with DST (via N-terminus). Interacts with RAC1. ITGA6:ITGB4 is found in a ternary complex with NRG1 and ERBB3. ITGA6:ITGB4 is found in a ternary complex with IGF1 and IGF1R. ITGA6:ITGB4 interacts with IGF2. Interacts with TMEM268; this interaction prevents ITGB4 degradation. Palmitoylated by DHHC3 at several cysteines of the membrane-proximal region, enhancing stability and cell surface expression. Palmitoylation also promotes secondary association with tertaspanins. In terms of tissue distribution, integrin alpha-6/beta-4 is predominantly expressed by epithelia. Isoform beta-4D is also expressed in colon and placenta. Isoform beta-4E is also expressed in epidermis, lung, duodenum, heart, spleen and stomach.

It localises to the cell membrane. It is found in the cell junction. The protein localises to the hemidesmosome. Integrin alpha-6/beta-4 is a receptor for laminin. Plays a critical structural role in the hemidesmosome of epithelial cells. Is required for the regulation of keratinocyte polarity and motility. ITGA6:ITGB4 binds to NRG1 (via EGF domain) and this binding is essential for NRG1-ERBB signaling. ITGA6:ITGB4 binds to IGF1 and this binding is essential for IGF1 signaling. ITGA6:ITGB4 binds to IGF2 and this binding is essential for IGF2 signaling. This Homo sapiens (Human) protein is Integrin beta-4 (ITGB4).